We begin with the raw amino-acid sequence, 842 residues long: Protein translocase subunit SecA (842 aa).

Residues Gln-85, 103–107, and Asp-493 contribute to the ATP site; that span reads GEGKT. The Zn(2+) site is built by Cys-825, Cys-827, Cys-836, and His-837.

The protein belongs to the SecA family. As to quaternary structure, monomer and homodimer. Part of the essential Sec protein translocation apparatus which comprises SecA, SecYEG and auxiliary proteins SecDF. Other proteins may also be involved. It depends on Zn(2+) as a cofactor.

The protein localises to the cell membrane. Its subcellular location is the cytoplasm. It catalyses the reaction ATP + H2O + cellular proteinSide 1 = ADP + phosphate + cellular proteinSide 2.. Its function is as follows. Part of the Sec protein translocase complex. Interacts with the SecYEG preprotein conducting channel. Has a central role in coupling the hydrolysis of ATP to the transfer of proteins into and across the cell membrane, serving as an ATP-driven molecular motor driving the stepwise translocation of polypeptide chains across the membrane. The protein is Protein translocase subunit SecA of Streptococcus equi subsp. zooepidemicus (strain H70).